Consider the following 399-residue polypeptide: Succinate--CoA ligase [ADP-forming] subunit beta (399 aa).

One can recognise an ATP-grasp domain in the interval 9 to 254; sequence KAVLAEFGAP…ESEEDPKEIE (246 aa). ATP contacts are provided by residues Lys-46, 53-55, Glu-109, Ala-112, and Glu-117; that span reads GRG. Mg(2+) contacts are provided by Asn-209 and Asp-223. Substrate-binding positions include Asn-274 and 331–333; that span reads GIM.

The protein belongs to the succinate/malate CoA ligase beta subunit family. As to quaternary structure, heterotetramer of two alpha and two beta subunits. The cofactor is Mg(2+).

It catalyses the reaction succinate + ATP + CoA = succinyl-CoA + ADP + phosphate. The enzyme catalyses GTP + succinate + CoA = succinyl-CoA + GDP + phosphate. It functions in the pathway carbohydrate metabolism; tricarboxylic acid cycle; succinate from succinyl-CoA (ligase route): step 1/1. Its function is as follows. Succinyl-CoA synthetase functions in the citric acid cycle (TCA), coupling the hydrolysis of succinyl-CoA to the synthesis of either ATP or GTP and thus represents the only step of substrate-level phosphorylation in the TCA. The beta subunit provides nucleotide specificity of the enzyme and binds the substrate succinate, while the binding sites for coenzyme A and phosphate are found in the alpha subunit. In Caulobacter sp. (strain K31), this protein is Succinate--CoA ligase [ADP-forming] subunit beta.